A 105-amino-acid chain; its full sequence is MARSVSSFKLLGASIFDGLYVSISRRGYSGAPPAAVTASFGRPGAMGKVERRDAMKESSSSETRAYSSAWAPDPVTGYYRPENCGAEIDAAELREMLLNHRVRSQ.

The tract at residues 48–67 (KVERRDAMKESSSSETRAYS) is disordered. Positions 57–67 (ESSSSETRAYS) are enriched in low complexity.

The protein belongs to the LEA type 3 family.

The protein is Late embryogenesis abundant protein Lea5-D (LEA5-D) of Gossypium hirsutum (Upland cotton).